The primary structure comprises 265 residues: Mlc titration factor A (265 aa).

Zn(2+)-binding residues include His111, His148, His152, and Glu211.

It belongs to the MtfA family. Interacts with Mlc. Zn(2+) is required as a cofactor.

The protein localises to the cytoplasm. Functionally, involved in the modulation of the activity of the glucose-phosphotransferase system (glucose-PTS). Interacts with the transcriptional repressor Mlc, preventing its interaction with DNA and leading to the modulation of expression of genes regulated by Mlc, including ptsG, which encodes the PTS system glucose-specific EIICB component. In terms of biological role, shows zinc-dependent metallopeptidase activity. In Escherichia coli O17:K52:H18 (strain UMN026 / ExPEC), this protein is Mlc titration factor A.